We begin with the raw amino-acid sequence, 210 residues long: Holliday junction branch migration complex subunit RuvA (210 aa).

Residues 1–70 (MISYLKGNPI…DEQPILYGFA (70 aa)) are domain I. A domain II region spans residues 71–149 (TAAERELFRQ…QWRKLVGITL (79 aa)). A flexible linker region spans residues 150–160 (PSTSAIPSLEV). The segment at 160 to 210 (VLEDVEMTLLALGYTNEEINKAISTLSQDNQMLKNTNSEEWIREAIAWLSQ) is domain III.

The protein belongs to the RuvA family. In terms of assembly, homotetramer. Forms an RuvA(8)-RuvB(12)-Holliday junction (HJ) complex. HJ DNA is sandwiched between 2 RuvA tetramers; dsDNA enters through RuvA and exits via RuvB. An RuvB hexamer assembles on each DNA strand where it exits the tetramer. Each RuvB hexamer is contacted by two RuvA subunits (via domain III) on 2 adjacent RuvB subunits; this complex drives branch migration. In the full resolvosome a probable DNA-RuvA(4)-RuvB(12)-RuvC(2) complex forms which resolves the HJ.

The protein resides in the cytoplasm. Functionally, the RuvA-RuvB-RuvC complex processes Holliday junction (HJ) DNA during genetic recombination and DNA repair, while the RuvA-RuvB complex plays an important role in the rescue of blocked DNA replication forks via replication fork reversal (RFR). RuvA specifically binds to HJ cruciform DNA, conferring on it an open structure. The RuvB hexamer acts as an ATP-dependent pump, pulling dsDNA into and through the RuvAB complex. HJ branch migration allows RuvC to scan DNA until it finds its consensus sequence, where it cleaves and resolves the cruciform DNA. This is Holliday junction branch migration complex subunit RuvA from Rippkaea orientalis (strain PCC 8801 / RF-1) (Cyanothece sp. (strain PCC 8801)).